Consider the following 592-residue polypeptide: Alanine aminotransferase, mitochondrial (592 aa).

The N-terminal 64 residues, 1–64 (MLSLSAKNHF…RKVRPVLQRH (64 aa)), are a transit peptide targeting the mitochondrion. At S77 the chain carries Phosphoserine. Pyridoxal 5'-phosphate is bound by residues A258, S259, Y284, N340, and S409. K412 bears the N6-(pyridoxal phosphate)lysine mark. R421 lines the pyridoxal 5'-phosphate pocket.

The protein belongs to the class-I pyridoxal-phosphate-dependent aminotransferase family. Alanine aminotransferase subfamily. As to quaternary structure, homodimer. Pyridoxal 5'-phosphate is required as a cofactor.

It localises to the mitochondrion matrix. It catalyses the reaction L-alanine + 2-oxoglutarate = pyruvate + L-glutamate. It participates in amino-acid degradation; L-alanine degradation via transaminase pathway; pyruvate from L-alanine: step 1/1. Alanine aminotransferase involved in both alanine biosynthesis and utilization. Under respiratory conditions, constitutes the sole pathway for alanine biosynthesis and catabolism. Under fermentative conditions, it plays a catabolic role and alanine is mainly synthesized through an alternative pathway. The chain is Alanine aminotransferase, mitochondrial (ALT1) from Saccharomyces cerevisiae (strain ATCC 204508 / S288c) (Baker's yeast).